Reading from the N-terminus, the 436-residue chain is Acetyl-CoA decarbonylase/synthase complex subunit delta 2 (436 aa).

Belongs to the CdhD family. In terms of assembly, heterodimer of delta and gamma chains. The ACDS complex is made up of alpha, epsilon, beta, gamma and delta chains with a probable stoichiometry of (alpha(2)epsilon(2))(4)-beta(8)-(gamma(1)delta(1))(8) (Potential).

Its pathway is one-carbon metabolism; methanogenesis from acetate. Its function is as follows. Part of a complex that catalyzes the reversible cleavage of acetyl-CoA, allowing growth on acetate as sole source of carbon and energy. Probably maintains the overall quaternary structure of the ACDS complex. This Methanosarcina acetivorans (strain ATCC 35395 / DSM 2834 / JCM 12185 / C2A) protein is Acetyl-CoA decarbonylase/synthase complex subunit delta 2 (cdhD2).